The primary structure comprises 458 residues: Cysteine--tRNA ligase (458 aa).

Cys33 contacts Zn(2+). The 'HIGH' region motif lies at 35–45 (PTVYDFAHIGN). Zn(2+) is bound by residues Cys221, His246, and Glu250. Residues 279–283 (KMSKS) carry the 'KMSKS' region motif. Lys282 is a binding site for ATP.

It belongs to the class-I aminoacyl-tRNA synthetase family. As to quaternary structure, monomer. The cofactor is Zn(2+).

The protein resides in the cytoplasm. The catalysed reaction is tRNA(Cys) + L-cysteine + ATP = L-cysteinyl-tRNA(Cys) + AMP + diphosphate. This is Cysteine--tRNA ligase from Rhizobium etli (strain ATCC 51251 / DSM 11541 / JCM 21823 / NBRC 15573 / CFN 42).